The chain runs to 512 residues: MATAAACISFASPSPARVVIRRQTRASASASATDRQEVVSPKRRLPLRKVPGDYGPPVVGAIRDRYEYFYGPGGRDGFFAARVRAHRSTVVRLNMPPGPFVARDPRVVALLDAASFPVLFDTSLVDKTDLFTGTFMPSTDLTGGYRVLSYLDPSEPNHAPLKTLLFYLLSHRRQQVIPKFREVYGDLFGLMENDLARVGKADFGVHNDAAAFGFLCQGLLGRDPAKSALGRDGPKLITKWVLFQLSPLLSLGLPTLVEDTLLHSLRLPPALVKKDYDRLADFFRDAAKAVVDEGERLGIAREEAVHNILFALCFNSFGGMKILFPTLVKWLGRAGARVHGRLATEVRGAVRDNGGEVTMKALAEMPLVKSAVYEALRIEPPVAMQYGRAKRDMVVESHDYGYEVREGEMLFGYQPMATKDPRVFARPEEYVPDRFLGEDGARLLRHVVWSNGPETAAPTLHDKQCAGKDFVVLVARLLLVELFLRYDSFDVEVGTSTLGSSVTVTSLKKATF.

Residues M1–R25 constitute a chloroplast transit peptide. The segment at Q23 to R43 is disordered. Residues K127, H158, and K162 each coordinate heme b. N315 contributes to the (13S)-hydroperoxy-(9Z,11E,15Z)-octadecatrienoate binding site. Positions 463 and 465 each coordinate heme b.

Belongs to the cytochrome P450 family. Heme b is required as a cofactor. As to expression, expressed in coleoptiles, and at lower level in leaves of dark-grown seedlings.

The protein localises to the plastid. It is found in the chloroplast membrane. It carries out the reaction (13S)-hydroperoxy-(9Z,11E,15Z)-octadecatrienoate = (9Z,13S,15Z)-12,13-epoxyoctadeca-9,11,15-trienoate + H2O. It functions in the pathway lipid metabolism; oxylipin biosynthesis. Functionally, involved in the biosynthesis of jasmonic acid, a growth regulator that is implicated also as a signaling molecule in plant defense. Converts 13-hydroperoxylinolenic acid to 12,13-epoxylinolenic acid. The chain is Allene oxide synthase 1, chloroplastic (CYP74A1) from Oryza sativa subsp. japonica (Rice).